The sequence spans 486 residues: Transcription enhancer factor-like protein egl-44 (486 aa).

The segment covering 47-57 has biased composition (low complexity); it reads GTTTPTTTSGG. Residues 47–87 form a disordered region; the sequence is GTTTPTTTSGGQMMTLSPPAGDGPGSAGSMAPESTSSLSDL. The segment at residues 88 to 164 is a DNA-binding region (TEA); it reads SGDAEGVWSI…QVLARKKLRD (77 aa). The disordered stretch occupies residues 165 to 188; that stretch reads EQAKKKGDIPSLLQQASPPGGVKS.

Interacts (via N-terminus) with egl-46 (via C-terminus); the interaction is direct; the interaction may regulate transcription. Interacts with yap-1 (via WW domain); the interaction may regulate transcription. Expressed in HSN neurons in embryos and in the FLP neurons from the L1 stage through to adults. Not expressed in touch cells. Also expressed in larval hypodermis, intestine, pharyngeal muscle and other neurons. In adults expression is lost from some neurons, is weaker in the hypodermis but remains in the intestine. Expressed in HOB neuron, ray neurons RnA and RnB, and the ray structural cell, Rnst; rays are male-specific genital sensilla (simple sense organs).

The protein resides in the nucleus. Transcription factor. Binds to DNA sequence motif 5'-CATNNNNAAATGCAT-3' as a heterodimer with egl-46. Represses expression of genes involved in differentiation of touch receptor neurons (TRN), probably acting as a heterodimer with egl-46, perhaps by occupying similar cis-regulatory elements as an unc-86/mec-3 heterodimer. Plays a role in cell fate specification of neurons, including the hook neuron HOB, and touch receptor neurons. Involved in male mating behavior, acting in concert with egl-46, via modulation of expression of polycystins lov-1 and pkd-2, homeodomain protein ceh-26, and neuropeptide-like protein nlp-8. Acts upstream of egl-46 to prevent touch cell differentiation in FLP neurons. Plays a role in neuron differentiation by repressing the expression of zag-1 in FLP neurons, probably acting as a heterodimer with egl-46; because zag-1 represses expression of egl-46 and egl-44, together these proteins form a bistable, negative-feedback loop that regulates the choice between neuronal fates. Also promotes HSN neuron development. In association with egl-46, regulates cell cycle exit in the neuronal Q cell lineage. Plays a role in specifying commissural dendrites of the PVD nociceptive neurons, acting in concert with egl-46. May be involved in thermal stress response downstream of yap-1. This is Transcription enhancer factor-like protein egl-44 (egl-44) from Caenorhabditis elegans.